We begin with the raw amino-acid sequence, 621 residues long: (-)-beta-phellandrene synthase 1, chloroplastic (621 aa).

Residues 1 to 49 constitute a chloroplast transit peptide; sequence MALALVSVAPLVSMRRSLFSSPYELKSIDKTIPNLVMCRKRMLGRPSIR. Positions 372, 376, and 524 each coordinate Mg(2+). A DDXXD motif motif is present at residues 372–376; it reads DDIYD.

The protein belongs to the terpene synthase family. Tpsd subfamily. Requires Mg(2+) as cofactor. The cofactor is Mn(2+).

It localises to the plastid. Its subcellular location is the chloroplast. It carries out the reaction (2E)-geranyl diphosphate = (-)-beta-phellandrene + diphosphate. It participates in terpene metabolism; oleoresin biosynthesis. The protein operates within secondary metabolite biosynthesis; terpenoid biosynthesis. Its function is as follows. Monoterpene synthase (TPS) involved in the biosynthesis of monoterpene natural products included in conifer oleoresin secretions and volatile emissions; these compounds contribute to biotic and abiotic stress defense against herbivores and pathogens. Catalyzes the conversion of (2E)-geranyl diphosphate (GPP) to (-)-beta-phellandrene. The sequence is that of (-)-beta-phellandrene synthase 1, chloroplastic from Pinus banksiana (Jack pine).